The chain runs to 105 residues: Large ribosomal subunit protein P1 (105 aa).

Met-1 bears the Blocked amino end (Met) mark. A compositionally biased stretch (low complexity) spans 65–76 (VAAPAGQQTQQA). Residues 65–105 (VAAPAGQQTQQAAEKKEEKKEEEKKGPSEEEIGGGLSSLFG) form a disordered region. The span at 77 to 92 (AEKKEEKKEEEKKGPS) shows a compositional bias: basic and acidic residues.

The protein belongs to the eukaryotic ribosomal protein P1/P2 family. As to quaternary structure, part of the 50S ribosomal subunit. Homodimer, it forms part of the ribosomal stalk which helps the ribosome interact with GTP-bound translation factors. Forms a heptameric uL10/P0(P1)2(P1)2(P1)2 complex, where uL10/P0 forms an elongated spine to which the P1 dimers bind in a sequential fashion.

In terms of biological role, forms part of the ribosomal stalk, playing a central role in the interaction of the ribosome with GTP-bound translation factors. This is Large ribosomal subunit protein P1 from Sulfolobus acidocaldarius (strain ATCC 33909 / DSM 639 / JCM 8929 / NBRC 15157 / NCIMB 11770).